The chain runs to 827 residues: Histone acetyltransferase MOF (827 aa).

Disordered stretches follow at residues 1 to 190 (MSEA…SDTV), 237 to 276 (QLGLPLAAPPPPPPPPAAEQVPETPASPTDDGEEPPAVYL), 288 to 309 (STPGLPTRLAPRDPRQRNMPPP), and 324 to 360 (EAISDDSSETSSSDDDEEEEEDEDDALTMEHDNTSRE). Positions 19 to 30 (PIEEEHEPEQEP) are enriched in acidic residues. Residues 55–69 (LDVSGSDQSAEQSLD) are compositionally biased toward polar residues. Low complexity predominate over residues 103–116 (SSTSTSSTRSSSSS). A compositionally biased stretch (acidic residues) spans 121–133 (VSEAEEAPPEPEP). The segment covering 141–150 (QEEKKEDGQD) has biased composition (basic and acidic residues). Residues 176-186 (DQEIETEDEPS) show a composition bias toward acidic residues. The segment covering 243–253 (AAPPPPPPPPA) has biased composition (pro residues). Acidic residues predominate over residues 326-350 (ISDDSSETSSSDDDEEEEEDEDDAL). Lysine 372 is covalently cross-linked (Glycyl lysine isopeptide (Lys-Gly) (interchain with G-Cter in ubiquitin)). A Tudor-knot domain is found at 382 to 433 (IYFIRREDGTVHRGQVLQSRTTENAAAPDEYYVHYVGLNRRLDGWVGRHRIS). Residues lysine 483, lysine 532, and lysine 539 each participate in a glycyl lysine isopeptide (Lys-Gly) (interchain with G-Cter in ubiquitin) cross-link. One can recognise an MYST-type HAT domain in the interval 538-813 (TKIKYIDKLQ…IDTDYLVWSP (276 aa)). Residues 571–596 (LYVCEYCLKYMRFRSSYAYHLHECDR) form a C2HC MYST-type zinc finger. The Zn(2+) site is built by cysteine 574, cysteine 577, histidine 590, and cysteine 594. Lysine 638 is subject to N6-acetyllysine; by autocatalysis. 6 residues coordinate acetyl-CoA: isoleucine 681, arginine 689, lysine 690, glycine 691, glycine 693, and lysine 694. Glutamate 714 (proton donor/acceptor) is an active-site residue. Residue lysine 715 forms a Glycyl lysine isopeptide (Lys-Gly) (interchain with G-Cter in ubiquitin) linkage. Acetyl-CoA-binding residues include serine 718 and serine 727. Residue lysine 749 forms a Glycyl lysine isopeptide (Lys-Gly) (interchain with G-Cter in ubiquitin) linkage. Acetyl-CoA is bound at residue tyrosine 774. Glycyl lysine isopeptide (Lys-Gly) (interchain with G-Cter in ubiquitin) cross-links involve residues lysine 776, lysine 798, and lysine 801. Lysine 798 is an acetyl-CoA binding site.

It belongs to the MYST (SAS/MOZ) family. As to quaternary structure, component of the male-specific lethal (MSL) histone acetyltransferase complex, composed of mof, mle, msl-1, msl-2 and msl-3 proteins, as well as roX1 and roX2 non-coding RNAs. Component of a maternal MSL subcomplex composed of mof, msl-1 and msl-3. Component of the non-specific lethal (NLS) histone acetyltransferase complex at least composed of mof, nls1, dgt1/NSL2, Rcd1/NSL3, Rcd5/MCRS2, MBD-R2 and wds. In males, interacts with nucleoporin Mgtor. In terms of processing, autoacetylation at Lys-638 is required for binding histone H4 with high affinity and for proper function. Post-translationally, ubiquitinated by msl-2.

It localises to the nucleus. It is found in the chromosome. It carries out the reaction L-lysyl-[histone] + acetyl-CoA = N(6)-acetyl-L-lysyl-[histone] + CoA + H(+). Histone acetyltransferase that catalyzes the formation of the majority of histone H4 acetylation at 'Lys-16' (H4K16ac), an epigenetic mark that prevents chromatin compaction and constitutes the only acetylation mark intergenerationally transmitted. Catalytic component of the male-specific lethal (MSL) complex, a multiprotein complex essential for elevating transcription of the single X chromosome in the male (X chromosome dosage compensation). The MSL complex specifically associates with the single X chromosome in males and mediates formation of H4K16ac, promoting a two-fold activation of X chromosome. Dosage compensation ensures that males with a single X chromosome have the same amount of most X-linked gene products as females with two X chromosomes. In oocytes, mof is also part of a maternal MSL subcomplex that mediates H4K16ac deposition for intergenerational transmission: H4K16ac prepares the chromatin landscape for establishment of nucleosome accessibility and poises genes for future activation. H4K16ac constitutes the only acetylation mark maintained from oocytes to fertilized embryos. Mof also constitutes the catalytic component of the non-specific lethal (NLS) complex, which promotes expression of housekeeping genes on X chromosome and autosomes. The NSL complex promotes strong expression of housekeeping genes compared to the two-fold expression mediated by the MSL complex on X chromosome, suggesting that the activation potential of mof is constrained in the context of dosage compensation. This is Histone acetyltransferase MOF from Drosophila melanogaster (Fruit fly).